Reading from the N-terminus, the 184-residue chain is UPF0397 protein SAR2767 (184 aa).

Transmembrane regions (helical) follow at residues 11-31 (VVAI…VVIP), 44-64 (AFLA…TGLI), 77-97 (AWWS…WIGL), 117-137 (GQII…DILI), and 148-168 (QGVI…TILL).

The protein belongs to the UPF0397 family.

The protein resides in the cell membrane. The protein is UPF0397 protein SAR2767 of Staphylococcus aureus (strain MRSA252).